Here is a 311-residue protein sequence, read N- to C-terminus: Aspartate carbamoyltransferase catalytic subunit (311 aa).

The carbamoyl phosphate site is built by arginine 55 and threonine 56. Lysine 83 is an L-aspartate binding site. Carbamoyl phosphate contacts are provided by arginine 105, histidine 134, and glutamine 137. 2 residues coordinate L-aspartate: arginine 167 and arginine 226. Glycine 267 and proline 268 together coordinate carbamoyl phosphate.

Belongs to the aspartate/ornithine carbamoyltransferase superfamily. ATCase family. Heterododecamer (2C3:3R2) of six catalytic PyrB chains organized as two trimers (C3), and six regulatory PyrI chains organized as three dimers (R2).

It carries out the reaction carbamoyl phosphate + L-aspartate = N-carbamoyl-L-aspartate + phosphate + H(+). It participates in pyrimidine metabolism; UMP biosynthesis via de novo pathway; (S)-dihydroorotate from bicarbonate: step 2/3. Functionally, catalyzes the condensation of carbamoyl phosphate and aspartate to form carbamoyl aspartate and inorganic phosphate, the committed step in the de novo pyrimidine nucleotide biosynthesis pathway. This chain is Aspartate carbamoyltransferase catalytic subunit, found in Corynebacterium jeikeium (strain K411).